Reading from the N-terminus, the 441-residue chain is Histone-lysine N-methyltransferase set9 (441 aa).

The SET domain maps to 108-221 (CKFEICSTNQ…PGEEITTFYS (114 aa)).

Belongs to the class V-like SAM-binding methyltransferase superfamily. Histone-lysine methyltransferase family. Suvar4-20 subfamily.

The protein localises to the nucleus. Its subcellular location is the chromosome. The catalysed reaction is L-lysyl(20)-[histone H4] + 3 S-adenosyl-L-methionine = N(6),N(6),N(6)-trimethyl-L-lysyl(20)-[histone H4] + 3 S-adenosyl-L-homocysteine + 3 H(+). Functionally, histone methyltransferase that specifically trimethylates 'Lys-20' of histone H4 to form H4K20me3. H4 'Lys-20' methylation is apparently not involved in the regulation of gene expression or heterochromatin function but participates in DNA damage response by giving a 'histone mark' required for the recruitment of the checkpoint protein Crb2 to sites of DNA damage. The polypeptide is Histone-lysine N-methyltransferase set9 (set9) (Schizosaccharomyces pombe (strain 972 / ATCC 24843) (Fission yeast)).